We begin with the raw amino-acid sequence, 246 residues long: 23S rRNA (guanosine-2'-O-)-methyltransferase RlmB (246 aa).

Positions 198, 218, and 227 each coordinate S-adenosyl-L-methionine.

This sequence belongs to the class IV-like SAM-binding methyltransferase superfamily. RNA methyltransferase TrmH family. RlmB subfamily.

The protein localises to the cytoplasm. The enzyme catalyses guanosine(2251) in 23S rRNA + S-adenosyl-L-methionine = 2'-O-methylguanosine(2251) in 23S rRNA + S-adenosyl-L-homocysteine + H(+). Its function is as follows. Specifically methylates the ribose of guanosine 2251 in 23S rRNA. This Shewanella oneidensis (strain ATCC 700550 / JCM 31522 / CIP 106686 / LMG 19005 / NCIMB 14063 / MR-1) protein is 23S rRNA (guanosine-2'-O-)-methyltransferase RlmB.